The primary structure comprises 471 residues: UDP-N-acetylmuramoylalanine--D-glutamate ligase (471 aa).

Position 135 to 141 (G135 to T141) interacts with ATP.

It belongs to the MurCDEF family.

It localises to the cytoplasm. The catalysed reaction is UDP-N-acetyl-alpha-D-muramoyl-L-alanine + D-glutamate + ATP = UDP-N-acetyl-alpha-D-muramoyl-L-alanyl-D-glutamate + ADP + phosphate + H(+). It participates in cell wall biogenesis; peptidoglycan biosynthesis. Its function is as follows. Cell wall formation. Catalyzes the addition of glutamate to the nucleotide precursor UDP-N-acetylmuramoyl-L-alanine (UMA). The sequence is that of UDP-N-acetylmuramoylalanine--D-glutamate ligase from Frankia casuarinae (strain DSM 45818 / CECT 9043 / HFP020203 / CcI3).